A 339-amino-acid chain; its full sequence is 7,8-didemethyl-8-hydroxy-5-deazariboflavin synthase (339 aa).

In terms of domain architecture, Radical SAM core spans 13 to 258; the sequence is ITYSKNIFIP…RDTDVSIQVP (246 aa). [4Fe-4S] cluster contacts are provided by C27, C31, and C34.

The protein belongs to the radical SAM superfamily. CofG family. As to quaternary structure, consists of two subunits, CofG and CofH. Requires [4Fe-4S] cluster as cofactor.

It carries out the reaction 5-amino-5-(4-hydroxybenzyl)-6-(D-ribitylimino)-5,6-dihydrouracil + S-adenosyl-L-methionine = 7,8-didemethyl-8-hydroxy-5-deazariboflavin + 5'-deoxyadenosine + L-methionine + NH4(+) + H(+). Its pathway is cofactor biosynthesis; coenzyme F0 biosynthesis. Functionally, catalyzes the radical-mediated synthesis of 7,8-didemethyl-8-hydroxy-5-deazariboflavin from 5-amino-5-(4-hydroxybenzyl)-6-(D-ribitylimino)-5,6-dihydrouracil. The sequence is that of 7,8-didemethyl-8-hydroxy-5-deazariboflavin synthase from Methanobrevibacter smithii (strain ATCC 35061 / DSM 861 / OCM 144 / PS).